Consider the following 71-residue polypeptide: MANPISIDTEMITLGQFLKLADVIQSGGMAKWFLSEHEVLVNDEPDNRRGRKLYVGDVVEIEGFGSFQVVN.

The S4 RNA-binding domain occupies 12–69 (ITLGQFLKLADVIQSGGMAKWFLSEHEVLVNDEPDNRRGRKLYVGDVVEIEGFGSFQV).

In terms of biological role, may assist in the assembly of the 50S subunit. This chain is Probable ribosome maturation protein RlbA, found in Bacillus subtilis (strain 168).